The primary structure comprises 258 residues: Large ribosomal subunit protein uL3 (258 aa).

The protein belongs to the universal ribosomal protein uL3 family. Part of the 50S ribosomal subunit. Forms a cluster with proteins L14 and L19.

Functionally, one of the primary rRNA binding proteins, it binds directly near the 3'-end of the 23S rRNA, where it nucleates assembly of the 50S subunit. This Spiroplasma kunkelii protein is Large ribosomal subunit protein uL3.